The sequence spans 572 residues: MFEEAGEVLENMLKVSFPLSLVLFLVLVCPLRAEAAHEFSVYRMQQYDLQGQTYGSRNAILNTEARTVEAEVLSRRCVMMRLADFSYEKYQKALRQSAGAVVIILPHNMSTLPQDIVQQFMELEPELLATETIVPVYFALEDEELLSIYTQTQISSSSQGSSSAAEVLLHTATANGFQMVTSGAQSKAVSDWAITSLEGRLTGSGGEDLPTIVLVAHYDSFGVAPWLSYGADSNGSGVAILLELARLFSRLYSYKRTHAGYNLLFFLSGGGKFNYQGTKRWLEDNLDHTDASLLQDNVAFVLCLDTLGNSDNLHLHVSKPPKEGSPQYTLLKELETVVAHQHPDLKFAMVHKKINLADDTLAWEHERFGIRRLPAFTLSHLESHRSPARHSIMDMRSVSPSLEGAGEATTGPHVDLGKLSRNTKVIAETLARVIYNLTEKGVTGDLEIFTEQMQVQEDQLASLVDWLTAQPRAAQLLDKDSSIINTLEHQLSRYLKDVKRHLVRADKRDPEFVFYDQLKQTMNAYRVKPAIFDLLLAVCIASYLGVLYLAIQNFGLLYGFLRRVTAPRVKQH.

Residues 1-35 (MFEEAGEVLENMLKVSFPLSLVLFLVLVCPLRAEA) form the signal peptide. Residues 36-530 (AHEFSVYRMQ…TMNAYRVKPA (495 aa)) lie on the Extracellular side of the membrane. 3 N-linked (GlcNAc...) asparagine glycosylation sites follow: Asn-108, Asn-234, and Asn-436. Residues 531 to 551 (IFDLLLAVCIASYLGVLYLAI) traverse the membrane as a helical segment. Topologically, residues 552–572 (QNFGLLYGFLRRVTAPRVKQH) are cytoplasmic.

It belongs to the nicastrin family. In terms of assembly, component of the multi-pass translocon (MPT) complex.

It localises to the endoplasmic reticulum membrane. Functionally, component of the multi-pass translocon (MPT) complex that mediates insertion of multi-pass membrane proteins into the lipid bilayer of membranes. The MPT complex takes over after the SEC61 complex: following membrane insertion of the first few transmembrane segments of proteins by the SEC61 complex, the MPT complex occludes the lateral gate of the SEC61 complex to promote insertion of subsequent transmembrane regions. Antagonizes Nodal signaling and subsequent organization of axial structures during mesodermal patterning. Ectopic expression results in cyclopia, due to a defect in mesendoderm patterning. This is BOS complex subunit ncln (ncln) from Danio rerio (Zebrafish).